The sequence spans 310 residues: ADP-L-glycero-D-manno-heptose-6-epimerase (310 aa).

NADP(+)-binding positions include 10–11 (FI), 31–32 (DN), Lys-38, Lys-53, 75–79 (EGACS), and Asn-92. Tyr-140 serves as the catalytic Proton acceptor. An NADP(+)-binding site is contributed by Lys-144. Asn-169 is a binding site for substrate. Positions 170 and 178 each coordinate NADP(+). The active-site Proton acceptor is the Lys-178. Substrate-binding positions include Ser-180, His-187, 201–204 (FEGS), and Arg-209. Lys-267 carries the post-translational modification N6-acetyllysine. Tyr-272 serves as a coordination point for substrate.

The protein belongs to the NAD(P)-dependent epimerase/dehydratase family. HldD subfamily. As to quaternary structure, homopentamer. It depends on NADP(+) as a cofactor.

The enzyme catalyses ADP-D-glycero-beta-D-manno-heptose = ADP-L-glycero-beta-D-manno-heptose. Its pathway is nucleotide-sugar biosynthesis; ADP-L-glycero-beta-D-manno-heptose biosynthesis; ADP-L-glycero-beta-D-manno-heptose from D-glycero-beta-D-manno-heptose 7-phosphate: step 4/4. Functionally, catalyzes the interconversion between ADP-D-glycero-beta-D-manno-heptose and ADP-L-glycero-beta-D-manno-heptose via an epimerization at carbon 6 of the heptose. This chain is ADP-L-glycero-D-manno-heptose-6-epimerase, found in Escherichia coli (strain ATCC 8739 / DSM 1576 / NBRC 3972 / NCIMB 8545 / WDCM 00012 / Crooks).